Reading from the N-terminus, the 493-residue chain is Leucine-rich repeat-containing protein 14 (493 aa).

One copy of the LRR 1; degenerate repeat lies at 111 to 146 (KHTLRVLDMTGLLDDGVEQDPGTMSMWDCTAAVART). The stretch at 194–218 (RLCCRDLRAEDLPMRNTVALLQLLD) is one LRR 2; degenerate repeat. The LRR 3; degenerate repeat unit spans residues 219–246 (AGCLRRVDLRFNNLGLRGLSVIIPHVAR). The stretch at 247-282 (FQHLASLRLHYVHGDSRQPSVDGEDNFRYFLAQMGR) is one LRR 4; degenerate repeat. LRR repeat units follow at residues 283–307 (FTCLRELSMGSSLLSGRLDQLLSTL), 308–339 (QSPLESLELAFCALLPEDLRFLARSSHAVHLK), 340–360 (KLDLSGNDLSGSQLEPFQGLL), 364–391 (AATLLHLELTECQLADTQLLATLPVLTR), and 392–416 (CASLRYLGLYGNPLSVAGLRELLRD).

This sequence belongs to the PRAME family. LRRC14 subfamily. As to quaternary structure, interacts with IKBKB; disrupts IKBKB-IKBKG interaction preventing I-kappa-B-kinase (IKK) core complex formation and leading to a decrease of IKBKB phosphorylation and NF-kappaB activation. Interacts with CHUK.

The protein localises to the cytoplasm. Negatively regulates Toll-like receptor-mediated NF-kappa-B signaling by disrupting IKK core complex formation through interaction with IKBKB. In Bos taurus (Bovine), this protein is Leucine-rich repeat-containing protein 14.